The following is a 165-amino-acid chain: SsrA-binding protein (165 aa).

Residues 1 to 10 (MSKKGKKKSK) are compositionally biased toward basic residues. The interval 1 to 21 (MSKKGKKKSKNNSSVDGNRRL) is disordered.

Belongs to the SmpB family.

Its subcellular location is the cytoplasm. Its function is as follows. Required for rescue of stalled ribosomes mediated by trans-translation. Binds to transfer-messenger RNA (tmRNA), required for stable association of tmRNA with ribosomes. tmRNA and SmpB together mimic tRNA shape, replacing the anticodon stem-loop with SmpB. tmRNA is encoded by the ssrA gene; the 2 termini fold to resemble tRNA(Ala) and it encodes a 'tag peptide', a short internal open reading frame. During trans-translation Ala-aminoacylated tmRNA acts like a tRNA, entering the A-site of stalled ribosomes, displacing the stalled mRNA. The ribosome then switches to translate the ORF on the tmRNA; the nascent peptide is terminated with the 'tag peptide' encoded by the tmRNA and targeted for degradation. The ribosome is freed to recommence translation, which seems to be the essential function of trans-translation. In Prochlorococcus marinus (strain NATL1A), this protein is SsrA-binding protein.